The sequence spans 1243 residues: Inositol hexakisphosphate and diphosphoinositol-pentakisphosphate kinase 2 (1243 aa).

Ser-38 carries the phosphoserine modification. Residue 53-54 (KK) coordinates substrate. Arg-134, Lys-187, His-194, and Arg-213 together coordinate ATP. 213 to 214 (RK) lines the substrate pocket. Residue Ser-223 is modified to Phosphoserine. Residues 237–240 (EEFM) and 246–248 (DVK) contribute to the ATP site. The substrate site is built by Lys-248 and Arg-262. ATP is bound by residues Ser-264, Asp-309, and 321–323 (DVN). 326–329 (SFVK) contacts substrate. Residues 371–442 (PTTSGTMMEL…VLDIARQLLM (72 aa)) form a polyphosphoinositide-binding domain region. Disordered stretches follow at residues 898–941 (KGCE…RDEV) and 957–1016 (HIHR…SPVS). The segment covering 915 to 941 (ASRENEGRRPFKIDNDDEPHTSKRDEV) has biased composition (basic and acidic residues). Over residues 958–969 (IHRKSPLPRSRK) the composition is skewed to basic residues. Phosphoserine occurs at positions 1006, 1016, 1074, 1091, 1165, 1172, and 1180. Positions 1185–1243 (TPAKILPTPPATLKSTKASSKPATSGPSSAVVPNTSSRKKNITSKTETHEHKKNTGKKK) are disordered. A compositionally biased stretch (low complexity) spans 1195 to 1209 (ATLKSTKASSKPATS). Positions 1210–1220 (GPSSAVVPNTS) are enriched in polar residues. Phosphoserine is present on residues Ser-1220 and Ser-1221.

Belongs to the histidine acid phosphatase family. VIP1 subfamily.

It localises to the cytoplasm. Its subcellular location is the cytosol. The catalysed reaction is 1D-myo-inositol hexakisphosphate + ATP = 1-diphospho-1D-myo-inositol 2,3,4,5,6-pentakisphosphate + ADP. It carries out the reaction 5-diphospho-1D-myo-inositol 1,2,3,4,6-pentakisphosphate + ATP + H(+) = 1,5-bis(diphospho)-1D-myo-inositol 2,3,4,6-tetrakisphosphate + ADP. Bifunctional inositol kinase that acts in concert with the IP6K kinases IP6K1, IP6K2 and IP6K3 to synthesize the diphosphate group-containing inositol pyrophosphates diphosphoinositol pentakisphosphate, PP-InsP5, and bis-diphosphoinositol tetrakisphosphate, (PP)2-InsP4. PP-InsP5 and (PP)2-InsP4, also respectively called InsP7 and InsP8, regulate a variety of cellular processes, including apoptosis, vesicle trafficking, cytoskeletal dynamics, exocytosis, insulin signaling and neutrophil activation. Phosphorylates inositol hexakisphosphate (InsP6) at position 1 to produce PP-InsP5 which is in turn phosphorylated by IP6Ks to produce (PP)2-InsP4. Alternatively, phosphorylates PP-InsP5 at position 1, produced by IP6Ks from InsP6, to produce (PP)2-InsP4. Required for normal hearing. The sequence is that of Inositol hexakisphosphate and diphosphoinositol-pentakisphosphate kinase 2 from Homo sapiens (Human).